The following is a 190-amino-acid chain: Recombination protein RecR (190 aa).

A C4-type zinc finger spans residues 58–73; the sequence is CEQCGALSENELCEIC. In terms of domain architecture, Toprim spans 81 to 167; the sequence is NILCIVESPK…TFSKIAQGIP (87 aa).

It belongs to the RecR family.

Functionally, may play a role in DNA repair. It seems to be involved in an RecBC-independent recombinational process of DNA repair. It may act with RecF and RecO. The protein is Recombination protein RecR of Campylobacter jejuni (strain RM1221).